The primary structure comprises 375 residues: Aminomethyltransferase (375 aa).

This sequence belongs to the GcvT family. As to quaternary structure, the glycine cleavage system is composed of four proteins: P, T, L and H.

The catalysed reaction is N(6)-[(R)-S(8)-aminomethyldihydrolipoyl]-L-lysyl-[protein] + (6S)-5,6,7,8-tetrahydrofolate = N(6)-[(R)-dihydrolipoyl]-L-lysyl-[protein] + (6R)-5,10-methylene-5,6,7,8-tetrahydrofolate + NH4(+). Functionally, the glycine cleavage system catalyzes the degradation of glycine. This is Aminomethyltransferase from Cupriavidus metallidurans (strain ATCC 43123 / DSM 2839 / NBRC 102507 / CH34) (Ralstonia metallidurans).